The primary structure comprises 91 residues: Pyruvate kinase (91 aa).

Position 48 (Arg48) interacts with substrate. Asn50, Ser52, Asp82, and Thr83 together coordinate K(+). 50–53 (NFSH) contacts ATP. ATP is bound at residue Arg89.

The protein belongs to the pyruvate kinase family. As to quaternary structure, homotetramer. Mg(2+) is required as a cofactor. It depends on K(+) as a cofactor.

It carries out the reaction pyruvate + ATP = phosphoenolpyruvate + ADP + H(+). It participates in carbohydrate degradation; glycolysis; pyruvate from D-glyceraldehyde 3-phosphate: step 5/5. This Leishmania braziliensis protein is Pyruvate kinase.